Reading from the N-terminus, the 727-residue chain is ABC transporter G family member STR2 (727 aa).

Topologically, residues 1-475 (MKTQGLELET…NFTNIRRTPE (475 aa)) are cytoplasmic. The region spanning 25–275 (LEFESLTYTV…LNRMGRKIPK (251 aa)) is the ABC transporter domain. Residue 69–76 (GPSGAGKS) participates in ATP binding. A helical transmembrane segment spans residues 476–496 (LFLSRLMVLTFMGVMMATMFH). At 497 to 510 (NPKNTLQGITNRLS) the chain is on the extracellular side. A helical transmembrane segment spans residues 511–531 (FFIFTVCLFFFSSNDAVPAFI). Topologically, residues 532 to 559 (QERFIFIRETSHNAYRASCYTIASLITH) are cytoplasmic. Residues 560–580 (MPFLALQALAYAAIVWFALEL) traverse the membrane as a helical segment. The Extracellular segment spans residues 581-583 (RGP). Residues 584–604 (FIYFFLVLFISLLSTNSFVVF) traverse the membrane as a helical segment. The Cytoplasmic portion of the chain corresponds to 605–612 (VSSIVPNY). The helical transmembrane segment at 613 to 633 (ILGYAAVIAFTALFFLFCGYF) threads the bilayer. Topologically, residues 634-699 (LSSEDIPLYW…GTEEIKKRNN (66 aa)) are extracellular. The N-linked (GlcNAc...) asparagine glycan is linked to Asn667. Residues 700-720 (VLIMLGWAVLYRILFYIILRF) traverse the membrane as a helical segment. At 721-727 (ASKNQRS) the chain is on the cytoplasmic side.

Belongs to the ABC transporter superfamily. ABCG family. Stunted arbuscule (STR) subfamily. As to quaternary structure, heterodimerizes with STR; the resulting transporter is located in the peri-arbuscular membrane. In terms of tissue distribution, expressed constitutively in the vascular tissue of roots.

The protein resides in the cell membrane. Functionally, together with STR, required for arbuscule development in arbuscular mycorrhizal symbiosis. The chain is ABC transporter G family member STR2 from Medicago truncatula (Barrel medic).